A 364-amino-acid polypeptide reads, in one-letter code: Long-wave-sensitive opsin 1 (364 aa).

At 1–58 (MTQRWGPQRLAGGQPQAGLEESTQASIFTYTNSNATRDPFEGPNYHIAPRWVYHLTSA) the chain is on the extracellular side. An O-linked (GlcNAc) serine glycan is attached at Ser22. A glycan (N-linked (GlcNAc...) asparagine) is linked at Asn34. Residues 59 to 79 (WMIFVVIASVFTNGLVLVATM) form a helical membrane-spanning segment. The Cytoplasmic portion of the chain corresponds to 80-90 (RFKKLRHPLNW). The helical transmembrane segment at 91 to 111 (ILVNLAIADLAETIIASTISV) threads the bilayer. Residues 112–126 (VNQIYGYFVLGHPLC) lie on the Extracellular side of the membrane. A disulfide bridge connects residues Cys126 and Cys203. Residues 127-147 (VVEGYTVSLCGITGLWSLAII) form a helical membrane-spanning segment. The Cytoplasmic portion of the chain corresponds to 148 to 168 (SWERWLVVCKPFGNVRFDAKL). The helical transmembrane segment at 169–189 (AIAGIAFSWIWAAVWTAPPIF) threads the bilayer. Topologically, residues 190–219 (GWSRYWPHGLKTSCGPDVFSGSSYPGVQSY) are extracellular. Residues 220 to 240 (MIVLMTTCCIIPLSVIILCYL) form a helical membrane-spanning segment. The Cytoplasmic segment spans residues 241 to 269 (QVWLAIRAVAKQQKESESTQKAEKEVTRM). Residues 270–290 (VVVMVLAYCLCWGPYTFFACF) form a helical membrane-spanning segment. The Extracellular portion of the chain corresponds to 291–301 (AAAHPGYAFHP). Residues 302–324 (LVAALPAYFAKSATIYNPIIYVF) form a helical membrane-spanning segment. Position 312 is an N6-(retinylidene)lysine (Lys312). Residues 325 to 364 (MNRQFRNCILQLFGKKVDDSSELSSASRTEASSVSSVSPA) are Cytoplasmic-facing.

Belongs to the G-protein coupled receptor 1 family. Opsin subfamily. Post-translationally, phosphorylated on some or all of the serine and threonine residues present in the C-terminal region. In terms of tissue distribution, the three color pigments are found in the cone photoreceptor cells.

The protein localises to the membrane. Functionally, visual pigments are the light-absorbing molecules that mediate vision. They consist of an apoprotein, opsin, covalently linked to cis-retinal. The sequence is that of Long-wave-sensitive opsin 1 (OPN1LW) from Canis lupus familiaris (Dog).